Consider the following 362-residue polypeptide: 3-dehydroquinate synthase (362 aa).

It belongs to the archaeal-type DHQ synthase family.

It carries out the reaction 2-amino-2,3,7-trideoxy-D-lyxo-hept-6-ulosonate + NAD(+) + H2O = 3-dehydroquinate + NH4(+) + NADH + H(+). In terms of biological role, catalyzes the oxidative deamination and cyclization of 2-amino-3,7-dideoxy-D-threo-hept-6-ulosonic acid (ADH) to yield 3-dehydroquinate (DHQ), which is fed into the canonical shikimic pathway of aromatic amino acid biosynthesis. In Methanococcus aeolicus (strain ATCC BAA-1280 / DSM 17508 / OCM 812 / Nankai-3), this protein is 3-dehydroquinate synthase.